Here is a 580-residue protein sequence, read N- to C-terminus: Type 3 secretion system translocon protein SctE (580 aa).

2 ipgC chaperone binding domain regions span residues 15 to 45 and 51 to 72; these read KILT…IADL and INTT…APKS. The mediates interaction with human MAD2L2 stretch occupies residues 61-70; it reads NILIPELKAP. Residues 104-224 are a coiled coil; it reads AWKSQQQARQ…MQLEKEIDSF (121 aa). Transmembrane regions (helical) follow at residues 313-333 and 399-419; these read ILGA…GGAS and IGSI…VVLV.

Belongs to the SctE/SipB/YopB family. As to quaternary structure, the core secretion machinery of the T3SS is composed of approximately 20 different proteins, including cytoplasmic components, a base, an export apparatus and a needle. This subunit is involved in the formation of a pore, called the translocon, in host membrane. Interacts with IpaC/SctB. Interacts with the needle tip protein IpaD/SctA. Interacts with the molecular chaperone IpgC, which prevents premature association with IpaC/SctB within the cytoplasm of Shigella cells and protects IpaB/SctE from proteolysis. Interacts with the host protein ICE in the cytoplasm of infected macrophages. Interacts with human MAD2L2 in the G2/M phase of the cell cycle.

Its subcellular location is the secreted. The protein localises to the host membrane. The protein resides in the host cell. It is found in the host nucleus. Its activity is regulated as follows. Interaction with the membrane is affected by the pH. IpaB/SctE is more efficient in destabilizing the membrane at pH 5.0 than at neutral pH. Component of the type III secretion system (T3SS), also called injectisome, which is used to inject bacterial effector proteins into eukaryotic host cells. IpaB/SctE and IpaC/SctB are inserted into the host membrane where they form a pore and allow the translocation of effector proteins into the cytosol of target cells. Interaction with IpaD/SctA at needle tips leads to the formation of the MxiH/SctF-IpaD/SctA-IpaB/SctE ternary complex, which is essential for host cell sensing. Interaction of IpaB/SctE with host membrane lipids promotes recruitment of IpaC/SctB at the needle tip concomitant with translocon insertion into the host membrane and type III secretion induction. In terms of biological role, required for efficient dissemination. Necessary for lysis of the two cellular membranes that surround bacteria in protrusions during cell-to-cell spread. Is sufficient to induce macrophage apoptosis through activation of the interleukin-1 beta converting enzyme (ICE) in infected macrophages. In epithelial cells, causes cell-cycle arrest by targeting host MAD2L2, an anaphase-promoting complex/cyclosome (APC) inhibitor. The protein is Type 3 secretion system translocon protein SctE of Shigella flexneri.